Reading from the N-terminus, the 283-residue chain is Elongation factor Ts (283 aa).

Residues 80–83 (TDFV) form an involved in Mg(2+) ion dislocation from EF-Tu region.

Belongs to the EF-Ts family.

It localises to the cytoplasm. Associates with the EF-Tu.GDP complex and induces the exchange of GDP to GTP. It remains bound to the aminoacyl-tRNA.EF-Tu.GTP complex up to the GTP hydrolysis stage on the ribosome. The protein is Elongation factor Ts of Enterobacter sp. (strain 638).